The primary structure comprises 1091 residues: Isoleucine--tRNA ligase (1091 aa).

Positions 48–58 (PFATGLPHFGH) match the 'HIGH' region motif. A 'KMSKS' region motif is present at residues 625-629 (KMSKA). Lys-628 is a binding site for ATP.

It belongs to the class-I aminoacyl-tRNA synthetase family. IleS type 2 subfamily. Monomer. Zn(2+) serves as cofactor.

The protein resides in the cytoplasm. It catalyses the reaction tRNA(Ile) + L-isoleucine + ATP = L-isoleucyl-tRNA(Ile) + AMP + diphosphate. Catalyzes the attachment of isoleucine to tRNA(Ile). As IleRS can inadvertently accommodate and process structurally similar amino acids such as valine, to avoid such errors it has two additional distinct tRNA(Ile)-dependent editing activities. One activity is designated as 'pretransfer' editing and involves the hydrolysis of activated Val-AMP. The other activity is designated 'posttransfer' editing and involves deacylation of mischarged Val-tRNA(Ile). This chain is Isoleucine--tRNA ligase, found in Treponema pallidum (strain Nichols).